The chain runs to 261 residues: Hemin import ATP-binding protein HmuV (261 aa).

The 236-residue stretch at 8–243 (IRVTDLSYSV…ESIRTAYGHE (236 aa)) folds into the ABC transporter domain. ATP is bound at residue 40–47 (GRNGAGKS).

This sequence belongs to the ABC transporter superfamily. Heme (hemin) importer (TC 3.A.1.14.5) family. As to quaternary structure, the complex is composed of two ATP-binding proteins (HmuV), two transmembrane proteins (HmuU) and a solute-binding protein (HmuT).

The protein localises to the cell membrane. Its function is as follows. Part of the ABC transporter complex HmuTUV involved in hemin import. Responsible for energy coupling to the transport system. The protein is Hemin import ATP-binding protein HmuV of Deinococcus radiodurans (strain ATCC 13939 / DSM 20539 / JCM 16871 / CCUG 27074 / LMG 4051 / NBRC 15346 / NCIMB 9279 / VKM B-1422 / R1).